We begin with the raw amino-acid sequence, 141 residues long: Nucleoside diphosphate kinase (141 aa).

ATP is bound by residues lysine 11, phenylalanine 59, arginine 87, threonine 93, arginine 104, and asparagine 114. Catalysis depends on histidine 117, which acts as the Pros-phosphohistidine intermediate.

This sequence belongs to the NDK family. As to quaternary structure, homotetramer. Mg(2+) serves as cofactor.

The protein resides in the cytoplasm. It carries out the reaction a 2'-deoxyribonucleoside 5'-diphosphate + ATP = a 2'-deoxyribonucleoside 5'-triphosphate + ADP. The catalysed reaction is a ribonucleoside 5'-diphosphate + ATP = a ribonucleoside 5'-triphosphate + ADP. Functionally, major role in the synthesis of nucleoside triphosphates other than ATP. The ATP gamma phosphate is transferred to the NDP beta phosphate via a ping-pong mechanism, using a phosphorylated active-site intermediate. This Actinobacillus succinogenes (strain ATCC 55618 / DSM 22257 / CCUG 43843 / 130Z) protein is Nucleoside diphosphate kinase.